Consider the following 253-residue polypeptide: Porin thermoregulatory protein EnvY (253 aa).

Residues 149-246 (DSVCRIIQSD…GLTPLNYLAK (98 aa)) form the HTH araC/xylS-type domain. DNA-binding regions (H-T-H motif) lie at residues 166 to 187 (RIVASSLCLSPSLLKKKLKNEN) and 213 to 236 (ITQVAQLCGYSSTSYFISVFKAFY).

Influences the temperature-dependent expression of several E.coli envelope proteins, most notably the porins OmpF and OmpC and the lambda receptor, LamB. This chain is Porin thermoregulatory protein EnvY (envY), found in Escherichia coli (strain K12).